Here is a 411-residue protein sequence, read N- to C-terminus: Zinc metalloproteinase/disintegrin (411 aa).

Residues 1 to 20 form the signal peptide; that stretch reads MIEVLLVTICLAVFPYQGSS. Residues 21–190 constitute a propeptide that is removed on maturation; sequence IILESGNVND…KASQLYLTPE (170 aa). Positions 197–395 constitute a Peptidase M12B domain; that stretch reads RYVKLAIVVD…SKPQCILNAP (199 aa). Residue Asp-284 participates in Ca(2+) binding. Disulfide bonds link Cys-308–Cys-390, Cys-352–Cys-374, and Cys-354–Cys-357. Residue His-333 coordinates Zn(2+). Residue Glu-334 is part of the active site. 2 residues coordinate Zn(2+): His-337 and His-343. Ca(2+) is bound by residues Cys-390 and Asn-393. A propeptide spanning residues 396-411 is cleaved from the precursor; the sequence is LRTDTVSTPVSGNEPL.

The protein belongs to the venom metalloproteinase (M12B) family. P-II subfamily. Monomer. The cofactor is Zn(2+). As to expression, expressed by the venom gland.

The protein localises to the secreted. Its function is as follows. Snake venom metalloproteinase that impairs hemostasis in the envenomed animal. The polypeptide is Zinc metalloproteinase/disintegrin (Protobothrops mucrosquamatus (Taiwan habu)).